We begin with the raw amino-acid sequence, 107 residues long: Large ribosomal subunit protein uL24 (107 aa).

This sequence belongs to the universal ribosomal protein uL24 family. In terms of assembly, part of the 50S ribosomal subunit.

In terms of biological role, one of two assembly initiator proteins, it binds directly to the 5'-end of the 23S rRNA, where it nucleates assembly of the 50S subunit. One of the proteins that surrounds the polypeptide exit tunnel on the outside of the subunit. The protein is Large ribosomal subunit protein uL24 of Gluconacetobacter diazotrophicus (strain ATCC 49037 / DSM 5601 / CCUG 37298 / CIP 103539 / LMG 7603 / PAl5).